Consider the following 159-residue polypeptide: Protein RseC (159 aa).

The Cytoplasmic portion of the chain corresponds to 1-72 (MIKEWATVVS…QKVELGIAEG (72 aa)). The chain crosses the membrane as a helical span at residues 73-95 (SLLSSALLVYMSPLVGLFLIASL). The Periplasmic portion of the chain corresponds to 96-98 (FQL). Residues 99 to 121 (LFASDVAALCGAILGGIGGFLIA) form a helical membrane-spanning segment. Over 122–159 (RGYSRKFAARAEWQPIILSVALPPGLVRFETSSEDASQ) the chain is Cytoplasmic.

Belongs to the RseC family.

It localises to the cell inner membrane. Its function is as follows. May play a role in reduction of the SoxR iron-sulfur cluster. May work together with the RsxABCDGE complex. The polypeptide is Protein RseC (Escherichia coli (strain K12)).